We begin with the raw amino-acid sequence, 655 residues long: RalA-binding protein 1-A (655 aa).

The disordered stretch occupies residues 1–153; it reads MTECFLPPAS…KKSKDLTAAD (153 aa). Over residues 52-68 the composition is skewed to basic and acidic residues; the sequence is DILHEPPDIVSEDEKDH. ATP is bound at residue 69 to 74; the sequence is GKKKGK. Basic residues-rich tracts occupy residues 69 to 79 and 102 to 118; these read GKKKGKFKKKE and KIKR…PSFS. Positions 102–119 are nuclear localization signal; sequence KIKRSKGIHVFKKPSFSK. The segment covering 119–150 has biased composition (basic and acidic residues); that stretch reads KKKEKDFKIKEKPKEEKHKEDKHKEKKSKDLT. A run of 2 repeats spans residues 133–137 and 138–142. A 2 X 5 AA tandem repeats of E-[D/E]-K-H-K region spans residues 133–142; that stretch reads EEKHKEDKHK. The tract at residues 149 to 214 is mediates association with membranes and could form transmembrane domains; that stretch reads LTAADVVKQW…PLVFRECIDF (66 aa). The Rho-GAP domain maps to 187-383; it reads IPLIEAAERT…PLRWSNMATM (197 aa). The segment at 398–495 is mediates interaction with RALA and RALB; it reads RRQEFLLNCL…LTEQEELVAM (98 aa). Position 413–420 (413–420) interacts with ATP; it reads AGVKDLSK. The segment at 494–510 is required to maintain nuclear localization; that stretch reads AMEQYLRRQIATEKEEI. Residues 496 to 655 are mediates interaction with REPS1 and REPS2; sequence EQYLRRQIAT…GKKLSSETLI (160 aa). Disordered stretches follow at residues 520 to 548 and 600 to 655; these read IQSR…EEEL and LQEE…ETLI. A compositionally biased stretch (acidic residues) spans 532 to 548; that stretch reads EEYSSESESESEDEEEL. A compositionally biased stretch (basic and acidic residues) spans 619 to 630; the sequence is NLPETKAPKDQP.

In terms of assembly, interacts with the active, GTP-bound form of ralB and ralA.

The protein resides in the cell membrane. Its subcellular location is the cytoplasm. It localises to the cytosol. It is found in the cytoskeleton. The protein localises to the spindle pole. The protein resides in the nucleus. Its subcellular location is the mitochondrion. It localises to the cell projection. It is found in the lamellipodium. The enzyme catalyses an S-substituted glutathione(in) + ATP + H2O = an S-substituted glutathione(out) + ADP + phosphate + H(+). It carries out the reaction ATP + H2O + xenobioticSide 1 = ADP + phosphate + xenobioticSide 2.. It catalyses the reaction leukotriene C4(in) + ATP + H2O = leukotriene C4(out) + ADP + phosphate + H(+). Its function is as follows. Multifunctional protein that functions as a downstream effector of ralA and ralB. As a GTPase-activating protein/GAP can inactivate CDC42 and RAC1 by stimulating their GTPase activity. As part of the Ral signaling pathway, may also regulate ligand-dependent EGF and insulin receptors-mediated endocytosis. During mitosis, may act as a scaffold protein in the phosphorylation of EPSIN/EPN1 by the mitotic kinase cyclin B-CDK1, preventing endocytosis during that phase of the cell cycle. During mitosis, also controls mitochondrial fission as an effector of ralA. Recruited to mitochondrion by ralA, acts as a scaffold to foster the mitotic kinase cyclin B-CDK1-mediated phosphorylation and activation of DNM1L. Acts on the cytoskeleton, to regulate pigment distribution and to regulate gastrulation. Could also function as a primary ATP-dependent active transporter for glutathione conjugates of electrophiles. May also actively catalyze the efflux of a wide range of substrates including xenobiotics like doxorubicin (DOX) contributing to cell multidrug resistance. This Xenopus laevis (African clawed frog) protein is RalA-binding protein 1-A (ralbp1-a).